Consider the following 209-residue polypeptide: Scoloptoxin SSD346 (209 aa).

Residues 1 to 22 (NILLSSTLFVLLMFQIIGSGLG) form the signal peptide.

Post-translationally, contains 2 disulfide bonds. Expressed by the venom gland.

Its subcellular location is the secreted. Its function is as follows. May act as a voltage-gated calcium channel inhibitor. The polypeptide is Scoloptoxin SSD346 (Scolopendra dehaani (Thai centipede)).